The chain runs to 383 residues: Flagellum-associated coiled-coil domain-containing protein 1 (383 aa).

A disordered region spans residues 26 to 79 (PYPLPKHPTGKFKPVLPPPISKEHNSLLSQPGKSTVSPRDKVQSGNTESSKAPS). Positions 51–77 (SLLSQPGKSTVSPRDKVQSGNTESSKA) are enriched in polar residues. 2 coiled-coil regions span residues 125–220 (TDII…YLKS) and 276–359 (KKMN…FQTK). N6-acetyllysine is present on lysine 354.

In terms of tissue distribution, isoform 1 is specific to germ cells of the testis and localizes to the principal piece of the sperm flagellum. Isoform 2 seems to be expressed mainly in somatic cells of the testis, and is not detected in mature spermatozoa (at protein level). Isoform 2 may also be expressed weakly in brain.

Its subcellular location is the cytoplasm. The protein resides in the cytoplasmic granule. It localises to the cell projection. It is found in the cilium. The protein localises to the flagellum. This Mus musculus (Mouse) protein is Flagellum-associated coiled-coil domain-containing protein 1.